We begin with the raw amino-acid sequence, 222 residues long: Thiopurine S-methyltransferase (222 aa).

S-adenosyl-L-methionine contacts are provided by Trp10, Leu45, Glu66, and Arg124.

It belongs to the class I-like SAM-binding methyltransferase superfamily. TPMT family.

It is found in the cytoplasm. The catalysed reaction is S-adenosyl-L-methionine + a thiopurine = S-adenosyl-L-homocysteine + a thiopurine S-methylether.. The protein is Thiopurine S-methyltransferase of Methylococcus capsulatus (strain ATCC 33009 / NCIMB 11132 / Bath).